The sequence spans 1610 residues: Adenylate cyclase type 10 (1610 aa).

2 Guanylate cyclase domains span residues 42 to 179 (VLMF…RLAQ) and 293 to 418 (TIVF…ARMM). The Mg(2+) site is built by aspartate 47 and isoleucine 48. 47 to 52 (DISGFT) lines the ATP pocket. Hydrogencarbonate is bound at residue lysine 95. Aspartate 99 is a Mg(2+) binding site. ATP is bound by residues aspartate 99 and lysine 144. The hydrogencarbonate site is built by valine 167, arginine 176, and methionine 337. ATP contacts are provided by residues valine 406 and 412–416 (NIAAR).

Belongs to the adenylyl cyclase class-4/guanylyl cyclase family. Mg(2+) serves as cofactor. Requires Mn(2+) as cofactor.

Its subcellular location is the cell membrane. It localises to the cytoplasm. It is found in the cytoskeleton. The protein localises to the perinuclear region. The protein resides in the nucleus. Its subcellular location is the cell projection. It localises to the cilium. It carries out the reaction ATP = 3',5'-cyclic AMP + diphosphate. Its activity is regulated as follows. Activated by manganese or magnesium ions. In the presence of magnesium ions, the enzyme is activated by bicarbonate. Calcium mildly increases the enzyme activity, also in the presence of magnesium ions. Catalyzes the formation of the signaling molecule cAMP. May function as sensor that mediates responses to changes in cellular bicarbonate and CO(2) levels. Has a critical role in mammalian spermatogenesis by producing the cAMP which regulates cAMP-responsive nuclear factors indispensable for sperm maturation in the epididymis. Induces capacitation, the maturational process that sperm undergo prior to fertilization. Involved in ciliary beat regulation. The sequence is that of Adenylate cyclase type 10 (ADCY10) from Oryctolagus cuniculus (Rabbit).